Consider the following 146-residue polypeptide: Basic phospholipase A2 beta-bungarotoxin A2 chain (146 aa).

Positions 1–19 (MNPAHLLVLSAVCVSLLGA) are cleaved as a signal peptide. Residues 20–27 (SNIPPQSL) constitute a propeptide that is removed on maturation. 6 cysteine pairs are disulfide-bonded: Cys54-Cys145, Cys56-Cys72, Cys71-Cys126, Cys78-Cys119, Cys87-Cys112, and Cys105-Cys117. Ca(2+)-binding residues include Tyr55, Gly57, and Gly59. His75 is a catalytic residue. Asp76 contacts Ca(2+). The active site involves Asp120.

This sequence belongs to the phospholipase A2 family. Group I subfamily. D49 sub-subfamily. Heterodimer; disulfide-linked. The A chain has phospholipase A2 activity and the B chain shows homology with the basic protease inhibitors. Requires Ca(2+) as cofactor. In terms of tissue distribution, expressed by the venom gland.

The protein resides in the secreted. It carries out the reaction a 1,2-diacyl-sn-glycero-3-phosphocholine + H2O = a 1-acyl-sn-glycero-3-phosphocholine + a fatty acid + H(+). Functionally, snake venom phospholipase A2 (PLA2) that inhibits neuromuscular transmission by blocking acetylcholine release from the nerve termini. PLA2 catalyzes the calcium-dependent hydrolysis of the 2-acyl groups in 3-sn-phosphoglycerides. This chain is Basic phospholipase A2 beta-bungarotoxin A2 chain, found in Bungarus flaviceps flaviceps (Red-headed krait).